The chain runs to 461 residues: MAELAKSAVLVSSCTDDLLGDAKQVVVGPNQEDLHSAEAVLNRYSTVGFQASNLARAFSICEMMLTPQSPSPSLMPTEGDQASESPVMVQPTLFVGVTANLFGTGCREAIRFLCTECVPLPNGVEPATPLDDMAGISCDGTGALKPSPCDSRALIHVLVVSGGAMEHDIRRACESYKLSRDGAEEEGEQFHHPVERDRSRSKGTDCHFGNVRYNSSGVASRNLFSCVMRCLVKRLAEAQRKEKANREAAPIPEAYYDVCSWAITPSTLWYMAGLWMADIFTEALQETGEVTDEKVASEEGLKRAKSTVLYWAARNGVPIFSPSLTDGDIMEFILTAGDTGVPLLQLDLVADIHRLNRLAMRSRRTGMMILGGGVVKHHVCNANLMRNGADYAVFLNNAQEFDGSDAGARPGEAVSWGKLRLDSTAVKVYSEVTIVFPLIVVHVFVAWVRMMRSKGKENIRS.

Residues 166 to 167 (EH), Glu331, His377, 403 to 405 (GSD), and 412 to 418 (EAVSWGK) each bind spermidine. Catalysis depends on Lys418, which acts as the Nucleophile. The chain crosses the membrane as a helical span at residues 428 to 448 (VYSEVTIVFPLIVVHVFVAWV).

Belongs to the deoxyhypusine synthase family. In terms of assembly, heterotetramer formed by a homodimer of the non-catalytic regulatory subunit DHSp and a homodimer of the catalytic subunit DHSc where DHSc appears to bind spermidine and DHSp appears to bind NAD(+). It depends on NAD(+) as a cofactor.

It localises to the membrane. It catalyses the reaction [eIF5A protein]-L-lysine + spermidine = [eIF5A protein]-deoxyhypusine + propane-1,3-diamine. The protein operates within protein modification; eIF5A hypusination. Its activity is regulated as follows. Allosterically activated by DHSp. Inhibited by spermididine analog N1-guanyl-1,7-diamineoheptane (GC7). Its function is as follows. In association with the non-catalytic regulatory subunit DHSp, catalyzes the NAD-dependent oxidative cleavage of spermidine and the subsequent transfer of the butylamine moiety of spermidine to the epsilon-amino group of a specific lysine residue of the eIF5A precursor protein to form the intermediate deoxyhypusine residue. Regulates protein levels of its regulatory subunit DHSp. Required for cell growth and survival. This is Deoxyhypusine synthase from Trypanosoma brucei brucei (strain 927/4 GUTat10.1).